A 196-amino-acid chain; its full sequence is dTTP/UTP pyrophosphatase (196 aa).

The active-site Proton acceptor is D76.

It belongs to the Maf family. YhdE subfamily. A divalent metal cation is required as a cofactor.

It localises to the cytoplasm. It catalyses the reaction dTTP + H2O = dTMP + diphosphate + H(+). The catalysed reaction is UTP + H2O = UMP + diphosphate + H(+). Functionally, nucleoside triphosphate pyrophosphatase that hydrolyzes dTTP and UTP. May have a dual role in cell division arrest and in preventing the incorporation of modified nucleotides into cellular nucleic acids. This Chlorobium chlorochromatii (strain CaD3) protein is dTTP/UTP pyrophosphatase.